The chain runs to 732 residues: Polyribonucleotide nucleotidyltransferase (732 aa).

Mg(2+) contacts are provided by D483 and D489. A KH domain is found at 550 to 609 (PRIVTVQIPVDKIGELIGPKGKNIRGIQDETGAELSVEDDGTVTIAAVGGDSMERAKQMV). The S1 motif domain occupies 619–687 (GETYEGTVKT…ERGRLRLSMK (69 aa)). The interval 684-732 (LSMKALLPKPEGMPDEPPQSERPRRDDGERSGGDRGGRGGRNGGGRDRR) is disordered. Residues 702 to 720 (QSERPRRDDGERSGGDRGG) show a composition bias toward basic and acidic residues.

Belongs to the polyribonucleotide nucleotidyltransferase family. Mg(2+) serves as cofactor.

It is found in the cytoplasm. It carries out the reaction RNA(n+1) + phosphate = RNA(n) + a ribonucleoside 5'-diphosphate. In terms of biological role, involved in mRNA degradation. Catalyzes the phosphorolysis of single-stranded polyribonucleotides processively in the 3'- to 5'-direction. This is Polyribonucleotide nucleotidyltransferase from Gemmatimonas aurantiaca (strain DSM 14586 / JCM 11422 / NBRC 100505 / T-27).